We begin with the raw amino-acid sequence, 87 residues long: U15-lycotoxin-Ls1f (87 aa).

Positions 1-20 are cleaved as a signal peptide; it reads MNSKIFAVLLLLGLLSCVLS. Positions 21 to 66 constitute a WAP domain; that stretch reads DQYCPKSSITACKKMNIRNDCCKDDDCTGGSWCCATPCGNFCKYPT. Cystine bridges form between Cys-24-Cys-54, Cys-32-Cys-58, Cys-41-Cys-53, Cys-42-Cys-80, and Cys-47-Cys-62.

The protein belongs to the venom protein 11 family. 01 (wap-1) subfamily. In terms of processing, contains 5 disulfide bonds. As to expression, expressed by the venom gland.

It localises to the secreted. Has antibacterial activity. The polypeptide is U15-lycotoxin-Ls1f (Lycosa singoriensis (Wolf spider)).